The primary structure comprises 338 residues: Anthranilate phosphoribosyltransferase (338 aa).

5-phospho-alpha-D-ribose 1-diphosphate-binding positions include Gly-81, 84 to 85, Ser-89, 91 to 94, 109 to 117, and Ala-121; these read GD, NVST, and KHGNRALSS. Gly-81 is an anthranilate binding site. Residue Ser-93 participates in Mg(2+) binding. Residue Asn-112 coordinates anthranilate. Arg-167 provides a ligand contact to anthranilate. Mg(2+) contacts are provided by Asp-226 and Glu-227.

This sequence belongs to the anthranilate phosphoribosyltransferase family. In terms of assembly, homodimer. Mg(2+) serves as cofactor.

It carries out the reaction N-(5-phospho-beta-D-ribosyl)anthranilate + diphosphate = 5-phospho-alpha-D-ribose 1-diphosphate + anthranilate. Its pathway is amino-acid biosynthesis; L-tryptophan biosynthesis; L-tryptophan from chorismate: step 2/5. Functionally, catalyzes the transfer of the phosphoribosyl group of 5-phosphorylribose-1-pyrophosphate (PRPP) to anthranilate to yield N-(5'-phosphoribosyl)-anthranilate (PRA). The chain is Anthranilate phosphoribosyltransferase from Rhodopseudomonas palustris (strain HaA2).